The primary structure comprises 304 residues: Acetylglutamate kinase (304 aa).

Substrate-binding positions include 70–71 (GG), arginine 92, and asparagine 185.

It belongs to the acetylglutamate kinase family. ArgB subfamily.

The protein resides in the cytoplasm. It carries out the reaction N-acetyl-L-glutamate + ATP = N-acetyl-L-glutamyl 5-phosphate + ADP. It participates in amino-acid biosynthesis; L-arginine biosynthesis; N(2)-acetyl-L-ornithine from L-glutamate: step 2/4. Functionally, catalyzes the ATP-dependent phosphorylation of N-acetyl-L-glutamate. This Paracoccus denitrificans (strain Pd 1222) protein is Acetylglutamate kinase.